The sequence spans 446 residues: tRNA-2-methylthio-N(6)-dimethylallyladenosine synthase (446 aa).

In terms of domain architecture, MTTase N-terminal spans 3–119 (KKIFIKTFGC…INEAILNHLK (117 aa)). [4Fe-4S] cluster is bound by residues Cys12, Cys48, Cys82, Cys158, Cys162, and Cys165. The Radical SAM core domain maps to 144-374 (KDSKVSSFLT…QEKLFNNQIK (231 aa)). One can recognise a TRAM domain in the interval 377–439 (KSLENKILNV…QNSLFGKLTE (63 aa)).

It belongs to the methylthiotransferase family. MiaB subfamily. As to quaternary structure, monomer. [4Fe-4S] cluster is required as a cofactor.

The protein resides in the cytoplasm. The catalysed reaction is N(6)-dimethylallyladenosine(37) in tRNA + (sulfur carrier)-SH + AH2 + 2 S-adenosyl-L-methionine = 2-methylsulfanyl-N(6)-dimethylallyladenosine(37) in tRNA + (sulfur carrier)-H + 5'-deoxyadenosine + L-methionine + A + S-adenosyl-L-homocysteine + 2 H(+). Functionally, catalyzes the methylthiolation of N6-(dimethylallyl)adenosine (i(6)A), leading to the formation of 2-methylthio-N6-(dimethylallyl)adenosine (ms(2)i(6)A) at position 37 in tRNAs that read codons beginning with uridine. The polypeptide is tRNA-2-methylthio-N(6)-dimethylallyladenosine synthase (Pelagibacter ubique (strain HTCC1062)).